We begin with the raw amino-acid sequence, 127 residues long: Unclassified hydrophobin 5 (127 aa).

A signal peptide spans methionine 1–alanine 24. Disulfide bonds link cysteine 39–cysteine 107, cysteine 46–cysteine 101, cysteine 47–cysteine 92, and cysteine 108–cysteine 121.

The protein belongs to the fungal hydrophobin family. Self-assembles to form functional amyloid fibrils called rodlets. Self-assembly into fibrillar rodlets occurs spontaneously at hydrophobic:hydrophilic interfaces and the rodlets further associate laterally to form amphipathic monolayers.

It localises to the secreted. The protein localises to the cell wall. Its function is as follows. Aerial growth, conidiation, and dispersal of filamentous fungi in the environment rely upon a capability of their secreting small amphipathic proteins called hydrophobins (HPBs) with low sequence identity. Class I can self-assemble into an outermost layer of rodlet bundles on aerial cell surfaces, conferring cellular hydrophobicity that supports fungal growth, development and dispersal; whereas Class II form highly ordered films at water-air interfaces through intermolecular interactions but contribute nothing to the rodlet structure. This is Unclassified hydrophobin 5 from Pleurotus ostreatus (strain PC15) (Oyster mushroom).